Here is a 258-residue protein sequence, read N- to C-terminus: Small ribosomal subunit protein uS2 (258 aa).

The interval 222 to 258 (GKALRDQDEAEQVEPVSQEEKDEVVAEAMSEADFEEQ) is disordered.

It belongs to the universal ribosomal protein uS2 family.

In Campylobacter fetus subsp. fetus (strain 82-40), this protein is Small ribosomal subunit protein uS2.